We begin with the raw amino-acid sequence, 188 residues long: Large ribosomal subunit protein uL5 (188 aa).

Belongs to the universal ribosomal protein uL5 family. Part of the 50S ribosomal subunit; contacts the 5S rRNA and probably tRNA. Forms a bridge to the 30S subunit in the 70S ribosome.

In terms of biological role, this is one of the proteins that bind and probably mediate the attachment of the 5S RNA into the large ribosomal subunit, where it forms part of the central protuberance. In the 70S ribosome it contacts protein S13 of the 30S subunit (bridge B1b), connecting the 2 subunits; this bridge is implicated in subunit movement. May contact the P site tRNA; the 5S rRNA and some of its associated proteins might help stabilize positioning of ribosome-bound tRNAs. The polypeptide is Large ribosomal subunit protein uL5 (Pyrococcus abyssi (strain GE5 / Orsay)).